A 921-amino-acid chain; its full sequence is TRPM8 channel-associated factor 1 (921 aa).

In terms of domain architecture, Peptidase M60 spans 542–841 (YCWMSTGLYI…TYLQLQEAFG (300 aa)).

This sequence belongs to the TCAF family. Interacts with TRPM8 (via N-terminus and C-terminus domains); the interaction inhibits TRPM8 channel activity. Interacts with TRPV6.

The protein localises to the cell membrane. Its function is as follows. Positively regulates the plasma membrane cation channel TRPM8 activity. Involved in the recruitment of TRPM8 to the cell surface. Promotes prostate cancer cell migration inhibition in a TRPM8-dependent manner. The chain is TRPM8 channel-associated factor 1 from Pongo abelii (Sumatran orangutan).